The following is a 209-amino-acid chain: 3-demethoxyubiquinol 3-hydroxylase (209 aa).

Positions 58, 88, 91, 140, 172, and 175 each coordinate Fe cation.

The protein belongs to the COQ7 family. Fe cation is required as a cofactor.

It localises to the cell membrane. The enzyme catalyses a 5-methoxy-2-methyl-3-(all-trans-polyprenyl)benzene-1,4-diol + AH2 + O2 = a 3-demethylubiquinol + A + H2O. The protein operates within cofactor biosynthesis; ubiquinone biosynthesis. Functionally, catalyzes the hydroxylation of 2-nonaprenyl-3-methyl-6-methoxy-1,4-benzoquinol during ubiquinone biosynthesis. The chain is 3-demethoxyubiquinol 3-hydroxylase from Polaromonas sp. (strain JS666 / ATCC BAA-500).